A 432-amino-acid chain; its full sequence is Enolase (432 aa).

Gln-166 contributes to the (2R)-2-phosphoglycerate binding site. Glu-208 functions as the Proton donor in the catalytic mechanism. Residues Asp-245, Glu-291, and Asp-318 each contribute to the Mg(2+) site. 4 residues coordinate (2R)-2-phosphoglycerate: Lys-343, Arg-372, Ser-373, and Lys-394. Catalysis depends on Lys-343, which acts as the Proton acceptor.

The protein belongs to the enolase family. The cofactor is Mg(2+).

The protein localises to the cytoplasm. The protein resides in the secreted. It localises to the cell surface. The enzyme catalyses (2R)-2-phosphoglycerate = phosphoenolpyruvate + H2O. The protein operates within carbohydrate degradation; glycolysis; pyruvate from D-glyceraldehyde 3-phosphate: step 4/5. Its function is as follows. Catalyzes the reversible conversion of 2-phosphoglycerate (2-PG) into phosphoenolpyruvate (PEP). It is essential for the degradation of carbohydrates via glycolysis. This is Enolase from Leptospira borgpetersenii serovar Hardjo-bovis (strain L550).